We begin with the raw amino-acid sequence, 459 residues long: Siroheme synthase (459 aa).

The interval 1-204 (MDHLPIFCQL…ADEKAVNATT (204 aa)) is precorrin-2 dehydrogenase /sirohydrochlorin ferrochelatase. NAD(+) contacts are provided by residues 22-23 (DV) and 43-44 (LT). Ser-128 bears the Phosphoserine mark. The tract at residues 216 to 459 (GEVVLVGAGP…KLNWFSNYYD (244 aa)) is uroporphyrinogen-III C-methyltransferase. Pro-225 contacts S-adenosyl-L-methionine. Residue Asp-248 is the Proton acceptor of the active site. Lys-270 acts as the Proton donor in catalysis. S-adenosyl-L-methionine contacts are provided by residues 301–303 (GGD), Ile-306, 331–332 (TA), Met-382, and Gly-411.

In the N-terminal section; belongs to the precorrin-2 dehydrogenase / sirohydrochlorin ferrochelatase family. The protein in the C-terminal section; belongs to the precorrin methyltransferase family.

It catalyses the reaction uroporphyrinogen III + 2 S-adenosyl-L-methionine = precorrin-2 + 2 S-adenosyl-L-homocysteine + H(+). The enzyme catalyses precorrin-2 + NAD(+) = sirohydrochlorin + NADH + 2 H(+). The catalysed reaction is siroheme + 2 H(+) = sirohydrochlorin + Fe(2+). The protein operates within cofactor biosynthesis; adenosylcobalamin biosynthesis; precorrin-2 from uroporphyrinogen III: step 1/1. Its pathway is cofactor biosynthesis; adenosylcobalamin biosynthesis; sirohydrochlorin from precorrin-2: step 1/1. It functions in the pathway porphyrin-containing compound metabolism; siroheme biosynthesis; precorrin-2 from uroporphyrinogen III: step 1/1. It participates in porphyrin-containing compound metabolism; siroheme biosynthesis; siroheme from sirohydrochlorin: step 1/1. The protein operates within porphyrin-containing compound metabolism; siroheme biosynthesis; sirohydrochlorin from precorrin-2: step 1/1. Multifunctional enzyme that catalyzes the SAM-dependent methylations of uroporphyrinogen III at position C-2 and C-7 to form precorrin-2 via precorrin-1. Then it catalyzes the NAD-dependent ring dehydrogenation of precorrin-2 to yield sirohydrochlorin. Finally, it catalyzes the ferrochelation of sirohydrochlorin to yield siroheme. The polypeptide is Siroheme synthase (Salmonella agona (strain SL483)).